Reading from the N-terminus, the 353-residue chain is 3-ketosteroid-9-alpha-monooxygenase, ferredoxin reductase component (353 aa).

An FAD-binding FR-type domain is found at 8–117; sequence SHVLELQVAE…LAPSGTFVPK (110 aa). Residues 264 to 353 enclose the 2Fe-2S ferredoxin-type domain; that stretch reads ATAVVTLDGT…SDSVEVTYDE (90 aa). [2Fe-2S] cluster-binding residues include C300, C305, C308, and C338.

As to quaternary structure, monomer. The two-component system 3-ketosteroid-9-alpha-monooxygenase is composed of an oxygenase component KshA and a reductase component KshB. The cofactor is FAD. It depends on [2Fe-2S] cluster as a cofactor.

It carries out the reaction androsta-1,4-diene-3,17-dione + 2 reduced [2Fe-2S]-[ferredoxin] + O2 + 2 H(+) = 9alpha-hydroxyandrosta-1,4-diene-3,17-dione + 2 oxidized [2Fe-2S]-[ferredoxin] + H2O. It participates in lipid metabolism; steroid biosynthesis. In terms of biological role, involved in the degradation of cholesterol. Catalyzes the introduction of a 9a-hydroxyl moiety into 1,4-androstadiene-3,17-dione (ADD) to yield the 9alpha-hydroxy-1,4-androstadiene-3,17-dione (9OHADD) intermediate which spontaneously form 3-hydroxy-9,10-seconandrost-1,3,5(10)-triene-9,17-dione (HSA) via the meta-cleavage of ring B with concomitant aromatization of ring A. This chain is 3-ketosteroid-9-alpha-monooxygenase, ferredoxin reductase component (kshB), found in Mycolicibacterium smegmatis (strain ATCC 700084 / mc(2)155) (Mycobacterium smegmatis).